The primary structure comprises 527 residues: Glutamate--cysteine ligase (527 aa).

The protein belongs to the glutamate--cysteine ligase type 1 family. Type 1 subfamily.

The enzyme catalyses L-cysteine + L-glutamate + ATP = gamma-L-glutamyl-L-cysteine + ADP + phosphate + H(+). Its pathway is sulfur metabolism; glutathione biosynthesis; glutathione from L-cysteine and L-glutamate: step 1/2. In Pseudomonas aeruginosa (strain LESB58), this protein is Glutamate--cysteine ligase.